The chain runs to 121 residues: Large ribosomal subunit protein bL21 (121 aa).

Belongs to the bacterial ribosomal protein bL21 family. As to quaternary structure, part of the 50S ribosomal subunit. Contacts protein L20.

In terms of biological role, this protein binds to 23S rRNA in the presence of protein L20. The protein is Large ribosomal subunit protein bL21 of Gloeobacter violaceus (strain ATCC 29082 / PCC 7421).